The primary structure comprises 373 residues: NADH-quinone oxidoreductase subunit D (373 aa).

It belongs to the complex I 49 kDa subunit family. NDH-1 is composed of 14 different subunits. Subunits NuoB, C, D, E, F, and G constitute the peripheral sector of the complex.

Its subcellular location is the cell inner membrane. The enzyme catalyses a quinone + NADH + 5 H(+)(in) = a quinol + NAD(+) + 4 H(+)(out). NDH-1 shuttles electrons from NADH, via FMN and iron-sulfur (Fe-S) centers, to quinones in the respiratory chain. The immediate electron acceptor for the enzyme in this species is believed to be ubiquinone. Couples the redox reaction to proton translocation (for every two electrons transferred, four hydrogen ions are translocated across the cytoplasmic membrane), and thus conserves the redox energy in a proton gradient. The protein is NADH-quinone oxidoreductase subunit D of Syntrophobacter fumaroxidans (strain DSM 10017 / MPOB).